The primary structure comprises 543 residues: Glutamyl-tRNA(Gln) amidotransferase subunit A, chloroplastic/mitochondrial (543 aa).

Residues Lys123 and Ser198 each act as charge relay system in the active site. The active-site Acyl-ester intermediate is Ser222.

It belongs to the amidase family. GatA subfamily. In terms of assembly, subunit of the heterotrimeric GatCAB amidotransferase (AdT) complex, composed of A, B and C subunits.

It localises to the mitochondrion. The protein localises to the plastid. Its subcellular location is the chloroplast stroma. The catalysed reaction is L-glutamyl-tRNA(Gln) + L-glutamine + ATP + H2O = L-glutaminyl-tRNA(Gln) + L-glutamate + ADP + phosphate + H(+). Allows the formation of correctly charged Gln-tRNA(Gln) through the transamidation of misacylated Glu-tRNA(Gln) in chloroplasts and mitochondria. The reaction takes place in the presence of glutamine and ATP through an activated gamma-phospho-Glu-tRNA(Gln). The chain is Glutamyl-tRNA(Gln) amidotransferase subunit A, chloroplastic/mitochondrial from Oryza sativa subsp. japonica (Rice).